The sequence spans 301 residues: ATP synthase gamma chain (301 aa).

It belongs to the ATPase gamma chain family. As to quaternary structure, F-type ATPases have 2 components, CF(1) - the catalytic core - and CF(0) - the membrane proton channel. CF(1) has five subunits: alpha(3), beta(3), gamma(1), delta(1), epsilon(1). CF(0) has three main subunits: a, b and c.

It is found in the cell inner membrane. Produces ATP from ADP in the presence of a proton gradient across the membrane. The gamma chain is believed to be important in regulating ATPase activity and the flow of protons through the CF(0) complex. The polypeptide is ATP synthase gamma chain (Helicobacter pylori (strain HPAG1)).